The primary structure comprises 350 residues: MSKTPERLVTSEVRDEDMTEASLRPLTLADFTGQAAARQNLSVFIAAAKARREALDHVLFVGPPGLGKTTLAQIVARELGVNFRSTSGPVIAKAGDLAAQLTALEERDVLFIDEIHRLNPAVEEILYPAMEDFQLDLIIGEGPGARSVKIDLARFTLVGATTRAGLLTTPLRDRFGIPIRLEFYTIEELERIVLRGARVQGLALEKEGANEIAKRARGTPRIAGRLLRRVRDFAIVDGVESVTRTLADKALSLLDVDPIGLDQMDRRYLNVIALSFGGGPVGIETIAAALSEPRDAIEDIIEPYLIQQGFLQRTPRGRLLTPHAFRHLGLKEPVRETPQYGLFPDQSEED.

Residues 1–184 (MSKTPERLVT…FGIPIRLEFY (184 aa)) form a large ATPase domain (RuvB-L) region. ATP is bound by residues Leu23, Arg24, Gly65, Lys68, Thr69, Thr70, 131–133 (EDF), Arg174, Tyr184, and Arg221. Thr69 lines the Mg(2+) pocket. Positions 185 to 255 (TIEELERIVL…LADKALSLLD (71 aa)) are small ATPAse domain (RuvB-S). Residues 258 to 350 (PIGLDQMDRR…GLFPDQSEED (93 aa)) form a head domain (RuvB-H) region. Residues Arg294, Arg313, and Arg318 each contribute to the DNA site.

The protein belongs to the RuvB family. As to quaternary structure, homohexamer. Forms an RuvA(8)-RuvB(12)-Holliday junction (HJ) complex. HJ DNA is sandwiched between 2 RuvA tetramers; dsDNA enters through RuvA and exits via RuvB. An RuvB hexamer assembles on each DNA strand where it exits the tetramer. Each RuvB hexamer is contacted by two RuvA subunits (via domain III) on 2 adjacent RuvB subunits; this complex drives branch migration. In the full resolvosome a probable DNA-RuvA(4)-RuvB(12)-RuvC(2) complex forms which resolves the HJ.

The protein resides in the cytoplasm. It carries out the reaction ATP + H2O = ADP + phosphate + H(+). In terms of biological role, the RuvA-RuvB-RuvC complex processes Holliday junction (HJ) DNA during genetic recombination and DNA repair, while the RuvA-RuvB complex plays an important role in the rescue of blocked DNA replication forks via replication fork reversal (RFR). RuvA specifically binds to HJ cruciform DNA, conferring on it an open structure. The RuvB hexamer acts as an ATP-dependent pump, pulling dsDNA into and through the RuvAB complex. RuvB forms 2 homohexamers on either side of HJ DNA bound by 1 or 2 RuvA tetramers; 4 subunits per hexamer contact DNA at a time. Coordinated motions by a converter formed by DNA-disengaged RuvB subunits stimulates ATP hydrolysis and nucleotide exchange. Immobilization of the converter enables RuvB to convert the ATP-contained energy into a lever motion, pulling 2 nucleotides of DNA out of the RuvA tetramer per ATP hydrolyzed, thus driving DNA branch migration. The RuvB motors rotate together with the DNA substrate, which together with the progressing nucleotide cycle form the mechanistic basis for DNA recombination by continuous HJ branch migration. Branch migration allows RuvC to scan DNA until it finds its consensus sequence, where it cleaves and resolves cruciform DNA. The protein is Holliday junction branch migration complex subunit RuvB of Beijerinckia indica subsp. indica (strain ATCC 9039 / DSM 1715 / NCIMB 8712).